We begin with the raw amino-acid sequence, 933 residues long: Isoleucine--tRNA ligase (933 aa).

The 'HIGH' region motif lies at 57–67 (PYANGNIHMGH). An L-isoleucyl-5'-AMP-binding site is contributed by Glu556. The 'KMSKS' region motif lies at 597-601 (KMSKS). Lys600 is a binding site for ATP. Residues Cys891, Cys894, Cys911, and Cys914 each coordinate Zn(2+).

Belongs to the class-I aminoacyl-tRNA synthetase family. IleS type 1 subfamily. Monomer. Requires Zn(2+) as cofactor.

It localises to the cytoplasm. It carries out the reaction tRNA(Ile) + L-isoleucine + ATP = L-isoleucyl-tRNA(Ile) + AMP + diphosphate. In terms of biological role, catalyzes the attachment of isoleucine to tRNA(Ile). As IleRS can inadvertently accommodate and process structurally similar amino acids such as valine, to avoid such errors it has two additional distinct tRNA(Ile)-dependent editing activities. One activity is designated as 'pretransfer' editing and involves the hydrolysis of activated Val-AMP. The other activity is designated 'posttransfer' editing and involves deacylation of mischarged Val-tRNA(Ile). The sequence is that of Isoleucine--tRNA ligase from Pediococcus pentosaceus (strain ATCC 25745 / CCUG 21536 / LMG 10740 / 183-1w).